The chain runs to 119 residues: MERLQSHRDFVTVLKRRRKAGGKDIVVHYLVPDDHHDDDDRTVHRRLGLAVSKSVGHAVTRNTVKRRFRVLARAHEDLLPAHCDIVLRAKPSAATASFASLDQQIAKAFATVAHKVAEA.

Belongs to the RnpA family. As to quaternary structure, consists of a catalytic RNA component (M1 or rnpB) and a protein subunit.

It carries out the reaction Endonucleolytic cleavage of RNA, removing 5'-extranucleotides from tRNA precursor.. Its function is as follows. RNaseP catalyzes the removal of the 5'-leader sequence from pre-tRNA to produce the mature 5'-terminus. It can also cleave other RNA substrates such as 4.5S RNA. The protein component plays an auxiliary but essential role in vivo by binding to the 5'-leader sequence and broadening the substrate specificity of the ribozyme. The sequence is that of Ribonuclease P protein component from Bifidobacterium longum (strain DJO10A).